The following is a 172-amino-acid chain: MRSDVTKISPRRIIYPLSPAPFNTPCKLNIISPFIKLTSTHSANKGVNHTRNHRFTPYGLGRLQLKSKGCPDSLSKSSIHSTAWRRPPTLTATGLMGHSGTTGCISGGVLEGPESQLSVLLLHSLDTGDVGRLRIAGTNLGRRVGLAGSGSGSGSGSGSDTGPFKKSQYKIL.

The span at 147–159 (AGSGSGSGSGSGS) shows a compositional bias: gly residues. Residues 147–172 (AGSGSGSGSGSGSDTGPFKKSQYKIL) are disordered.

This is an uncharacterized protein from Homo sapiens (Human).